Reading from the N-terminus, the 187-residue chain is Flavin prenyltransferase UbiX (187 aa).

FMN is bound by residues glycine 9–serine 11, serine 34, and arginine 123. Dimethylallyl phosphate is bound by residues tyrosine 153 and lysine 169.

It belongs to the UbiX/PAD1 family.

It catalyses the reaction dimethylallyl phosphate + FMNH2 = prenylated FMNH2 + phosphate. Functionally, flavin prenyltransferase that catalyzes the synthesis of the prenylated FMN cofactor (prenyl-FMN) for 4-hydroxy-3-polyprenylbenzoic acid decarboxylase UbiD. The prenyltransferase is metal-independent and links a dimethylallyl moiety from dimethylallyl monophosphate (DMAP) to the flavin N5 and C6 atoms of FMN. The protein is Flavin prenyltransferase UbiX of Helicobacter pylori (strain ATCC 700392 / 26695) (Campylobacter pylori).